The primary structure comprises 739 residues: Adenosylcobalamin-dependent ribonucleoside-triphosphate reductase (739 aa).

A disulfide bond links Cys119 and Cys419. An effector region-1 region spans residues Ser147–Met158. The effector region-2 stretch occupies residues Ala168–Val313. Residues Cys408 and Glu410 contribute to the active site. Residues Phe565–Val626 form an adenosylcobalamin-binding-1 region. The segment at Leu685 to Glu724 is adenosylcobalamin-binding-2.

This sequence belongs to the class II ribonucleoside-triphosphate reductase family. Monomer. The cofactor is adenosylcob(III)alamin.

The enzyme catalyses a 2'-deoxyribonucleoside 5'-triphosphate + [thioredoxin]-disulfide + H2O = a ribonucleoside 5'-triphosphate + [thioredoxin]-dithiol. Its activity is regulated as follows. Allosterically regulated by ATP and dNTP. The chain is Adenosylcobalamin-dependent ribonucleoside-triphosphate reductase (rtpR) from Lactobacillus delbrueckii subsp. bulgaricus (strain ATCC 11842 / DSM 20081 / BCRC 10696 / JCM 1002 / NBRC 13953 / NCIMB 11778 / NCTC 12712 / WDCM 00102 / Lb 14).